Reading from the N-terminus, the 246-residue chain is MKIIEAKHFDDMSLKAAQFMIEKIQRDPTITLGLATGGTPQKMYELLINDHRTNGTSYHQVTTFNLDEYIGLDRHDPNSYYTYMHKALFDHIDIRDEQAFLPNGTASNFNAECERYEALIQQRGGIDLQVLGIGANGHIGFNEPGTSFESSTHIVKLTDSTREANARYFNDLSEVPTEAITMGIQSIMNAKEILLLASGKKKADALYQLIHGKVDESFPASVLQRHEQVTIIADREALQKVAVSSN.

Asp67 functions as the Proton acceptor; for enolization step in the catalytic mechanism. The active-site For ring-opening step is the Asn136. His138 functions as the Proton acceptor; for ring-opening step in the catalytic mechanism. Glu143 acts as the For ring-opening step in catalysis.

It belongs to the glucosamine/galactosamine-6-phosphate isomerase family. NagB subfamily.

The enzyme catalyses alpha-D-glucosamine 6-phosphate + H2O = beta-D-fructose 6-phosphate + NH4(+). The protein operates within amino-sugar metabolism; N-acetylneuraminate degradation; D-fructose 6-phosphate from N-acetylneuraminate: step 5/5. In terms of biological role, catalyzes the reversible isomerization-deamination of glucosamine 6-phosphate (GlcN6P) to form fructose 6-phosphate (Fru6P) and ammonium ion. The protein is Glucosamine-6-phosphate deaminase of Halalkalibacterium halodurans (strain ATCC BAA-125 / DSM 18197 / FERM 7344 / JCM 9153 / C-125) (Bacillus halodurans).